We begin with the raw amino-acid sequence, 278 residues long: Delta(3,5)-Delta(2,4)-dienoyl-CoA isomerase, peroxisomal (278 aa).

Met1 carries the N-acetylmethionine modification. Substrate contacts are provided by residues 69–73 (SGIDL) and Gly128. Positions 276 to 278 (AKL) match the Microbody targeting signal motif.

This sequence belongs to the enoyl-CoA hydratase/isomerase family. Expressed in roots, leaves, stems and flowers.

Its subcellular location is the peroxisome. It catalyses the reaction a (3E,5Z)-dienoyl-CoA = a (2E,4E)-(5,6-saturated)-dienoyl-CoA. It participates in lipid metabolism; fatty acid beta-oxidation. In terms of biological role, converts 3,5-dienoyl-CoAs to the corresponding 2,4-dienoyl-CoAs. Involved in degradation of unsaturated fatty acids. The protein is Delta(3,5)-Delta(2,4)-dienoyl-CoA isomerase, peroxisomal of Arabidopsis thaliana (Mouse-ear cress).